The chain runs to 875 residues: Translation initiation factor IF-2 (875 aa).

3 disordered regions span residues M1–A20, L47–A102, and E126–G246. Over residues A54–P66 the composition is skewed to low complexity. Residues A67–S85 are compositionally biased toward pro residues. Basic and acidic residues-rich tracts occupy residues R88–A102 and E126–A140. Low complexity-rich tracts occupy residues E141–P195 and P202–P221. The span at K223–G246 shows a compositional bias: basic and acidic residues. A tr-type G domain is found at A374 to K544. Positions G383–T390 are G1. G383–T390 contributes to the GTP binding site. The G2 stretch occupies residues G408–H412. Residues D430 to G433 form a G3 region. Residues D430 to H434 and T484 to D487 each bind GTP. The G4 stretch occupies residues T484–D487. Positions S520–K522 are G5.

Belongs to the TRAFAC class translation factor GTPase superfamily. Classic translation factor GTPase family. IF-2 subfamily.

Its subcellular location is the cytoplasm. Functionally, one of the essential components for the initiation of protein synthesis. Protects formylmethionyl-tRNA from spontaneous hydrolysis and promotes its binding to the 30S ribosomal subunits. Also involved in the hydrolysis of GTP during the formation of the 70S ribosomal complex. This chain is Translation initiation factor IF-2, found in Novosphingobium aromaticivorans (strain ATCC 700278 / DSM 12444 / CCUG 56034 / CIP 105152 / NBRC 16084 / F199).